Consider the following 647-residue polypeptide: Exoribonuclease 2 (647 aa).

One can recognise an RNB domain in the interval 190-519 (REDLTSLPFV…NHRLLKAIIK (330 aa)). Residues 564–646 (EQRFSAEVID…ETRSIVARPV (83 aa)) form the S1 motif domain.

The protein belongs to the RNR ribonuclease family. RNase II subfamily.

It localises to the cytoplasm. It catalyses the reaction Exonucleolytic cleavage in the 3'- to 5'-direction to yield nucleoside 5'-phosphates.. In terms of biological role, involved in mRNA degradation. Hydrolyzes single-stranded polyribonucleotides processively in the 3' to 5' direction. The polypeptide is Exoribonuclease 2 (Erwinia tasmaniensis (strain DSM 17950 / CFBP 7177 / CIP 109463 / NCPPB 4357 / Et1/99)).